The chain runs to 308 residues: UPF0026 protein jhp_0109 (308 aa).

The Radical SAM core domain maps to 18-247 (FGKSLGVDLS…VSLPKRSTAQ (230 aa)). 3 residues coordinate [4Fe-4S] cluster: Cys33, Cys37, and Cys40.

Belongs to the UPF0026 family. [4Fe-4S] cluster serves as cofactor.

In Helicobacter pylori (strain J99 / ATCC 700824) (Campylobacter pylori J99), this protein is UPF0026 protein jhp_0109.